The sequence spans 430 residues: Adenylosuccinate synthetase (430 aa).

GTP-binding positions include 13-19 (GDEGKGK) and 41-43 (GHT). Residue Asp14 is the Proton acceptor of the active site. The Mg(2+) site is built by Asp14 and Gly41. Residues 14-17 (DEGK), 39-42 (NAGH), Thr130, Arg144, Gln225, Thr240, and Arg304 each bind IMP. Catalysis depends on His42, which acts as the Proton donor. Residue 300–306 (STTGRAR) coordinates substrate. GTP-binding positions include Arg306, 332–334 (KLD), and 414–416 (STG).

This sequence belongs to the adenylosuccinate synthetase family. In terms of assembly, homodimer. Mg(2+) serves as cofactor.

It is found in the cytoplasm. It carries out the reaction IMP + L-aspartate + GTP = N(6)-(1,2-dicarboxyethyl)-AMP + GDP + phosphate + 2 H(+). It functions in the pathway purine metabolism; AMP biosynthesis via de novo pathway; AMP from IMP: step 1/2. Its function is as follows. Plays an important role in the de novo pathway of purine nucleotide biosynthesis. Catalyzes the first committed step in the biosynthesis of AMP from IMP. This is Adenylosuccinate synthetase from Azotobacter vinelandii (strain DJ / ATCC BAA-1303).